We begin with the raw amino-acid sequence, 177 residues long: Actinorhodin polyketide dimerase (177 aa).

To S.pristinaespiralis SnaC.

The protein operates within antibiotic biosynthesis; actinorhodin biosynthesis. The polypeptide is Actinorhodin polyketide dimerase (actVB) (Streptomyces coelicolor (strain ATCC BAA-471 / A3(2) / M145)).